A 139-amino-acid chain; its full sequence is Putative pre-16S rRNA nuclease (139 aa).

The protein belongs to the YqgF nuclease family.

It is found in the cytoplasm. Functionally, could be a nuclease involved in processing of the 5'-end of pre-16S rRNA. This Streptococcus pneumoniae (strain JJA) protein is Putative pre-16S rRNA nuclease.